A 240-amino-acid polypeptide reads, in one-letter code: MADS-box protein SVP (240 aa).

One can recognise an MADS-box domain in the interval Arg-3–Phe-57. The K-box domain maps to Gln-87 to Arg-180. A disordered region spans residues Val-202–Gly-240. Over residues Gly-206–Gly-220 the composition is skewed to polar residues.

As to quaternary structure, forms a heterodimer with AP1 and SVP. Interacts with the SEU-LUG corepressor complex when complexed to AP1. Interacts with AGL15. Interacts with AGL16. Detected in roots and leaves. Expressed at very low levels in flowers and siliques. Present in floral meristems.

The protein resides in the nucleus. In terms of biological role, transcription repressor that inhibit floral transition in the autonomous flowering pathway, independent of photoperiod and temperature. Acts in a dosage-dependent manner. Together with AGL24 and AP1, controls the identity of the floral meristem and regulates expression of class B, C and E genes. Promotes EFM expression to suppress flowering. This chain is MADS-box protein SVP, found in Arabidopsis thaliana (Mouse-ear cress).